A 289-amino-acid chain; its full sequence is tRNA acetyltransferase TAN1 (289 aa).

The segment covering Met-1–Lys-10 has biased composition (basic and acidic residues). 2 disordered regions span residues Met-1 to Thr-31 and Asp-64 to Glu-83. Ser-72 is subject to Phosphoserine. The region spanning Ala-146–Asp-259 is the THUMP domain.

The protein localises to the cytoplasm. The protein resides in the nucleus. Probable tRNA acetyltransferase required for the formation of the modified nucleoside N(4)-acetylcytidine in serine and leucine tRNAs. Binds RNA. This is tRNA acetyltransferase TAN1 (TAN1) from Saccharomyces cerevisiae (strain ATCC 204508 / S288c) (Baker's yeast).